The following is a 239-amino-acid chain: Geranylgeranylglyceryl phosphate synthase (239 aa).

Mg(2+) contacts are provided by Asp18 and Ser45. Residues 166–172 (YLEAGSG), 197–198 (GG), and 219–220 (GT) each bind sn-glycerol 1-phosphate.

The protein belongs to the GGGP/HepGP synthase family. Group II subfamily. Requires Mg(2+) as cofactor.

It localises to the cytoplasm. It carries out the reaction sn-glycerol 1-phosphate + (2E,6E,10E)-geranylgeranyl diphosphate = sn-3-O-(geranylgeranyl)glycerol 1-phosphate + diphosphate. Its pathway is membrane lipid metabolism; glycerophospholipid metabolism. Functionally, prenyltransferase that catalyzes the transfer of the geranylgeranyl moiety of geranylgeranyl diphosphate (GGPP) to the C3 hydroxyl of sn-glycerol-1-phosphate (G1P). This reaction is the first ether-bond-formation step in the biosynthesis of archaeal membrane lipids. This chain is Geranylgeranylglyceryl phosphate synthase, found in Pyrobaculum islandicum (strain DSM 4184 / JCM 9189 / GEO3).